We begin with the raw amino-acid sequence, 1235 residues long: ATP-dependent DNA helicase mph1 (1235 aa).

Disordered regions lie at residues 20 to 78 and 96 to 148; these read LTQA…YRIH and DEMP…VHSP. Positions 61–72 are enriched in basic and acidic residues; it reads SRSDNDEADEKK. A compositionally biased stretch (polar residues) spans 137 to 148; sequence AKTQKQNIVHSP. Residues 272–440 enclose the Helicase ATP-binding domain; it reads IVHKGLFNNL…EVIDNLEIAE (169 aa). 285–292 is an ATP binding site; sequence LPTGLGKT. The DEAH box signature appears at 388–391; sequence DEAH. In terms of domain architecture, Helicase C-terminal spans 608-784; that stretch reads KLTYLCDTVL…GSRFTFRHDL (177 aa). Disordered regions lie at residues 808–827, 944–1117, and 1144–1235; these read NTQD…RKKL, SRLQ…PPLM, and TGAK…DSDE. Residues 947-958 are compositionally biased toward basic and acidic residues; it reads QRPEDRDNKPYG. The span at 1015 to 1027 shows a compositional bias: basic residues; the sequence is VAPKKAKPRRGRA. The segment covering 1065–1074 has biased composition (basic and acidic residues); it reads PGERVDRTSD. The span at 1075-1085 shows a compositional bias: acidic residues; it reads MEELEADDDSD. 2 stretches are compositionally biased toward polar residues: residues 1095–1114 and 1146–1159; these read PTQT…SSSP and AKNS…MTQE. The span at 1160–1170 shows a compositional bias: low complexity; that stretch reads SSDGGDSMDSD. Positions 1194 to 1209 are enriched in polar residues; sequence PSSSVFSSGQKATPNM.

The protein belongs to the DEAD box helicase family. DEAH subfamily. FANCM sub-subfamily. Interacts with the MHF histone-fold complex to form the FANCM-MHF complex.

It is found in the nucleus. The catalysed reaction is ATP + H2O = ADP + phosphate + H(+). ATP-dependent DNA helicase involved in DNA damage repair by homologous recombination and in genome maintenance. Capable of unwinding D-loops. Plays a role in limiting crossover recombinants during mitotic DNA double-strand break (DSB) repair. Component of a FANCM-MHF complex which promotes gene conversion at blocked replication forks, probably by reversal of the stalled fork. In Sclerotinia sclerotiorum (strain ATCC 18683 / 1980 / Ss-1) (White mold), this protein is ATP-dependent DNA helicase mph1.